A 517-amino-acid chain; its full sequence is Putative transporter C543.05c (517 aa).

Transmembrane regions (helical) follow at residues 68–88 (SFGV…FALL), 93–113 (LCIV…YDIM), 121–141 (FPFL…IAIA), 155–175 (CEIF…QVLC), 186–206 (FLSI…DTVG), 217–237 (ILLL…FQHI), 269–289 (IPVG…ILFY), 311–331 (GFHW…ILGI), 377–397 (SNFI…LLVL), 403–423 (CVLA…NGIT), and 449–471 (RVVW…ITQV).

The protein belongs to the anion exchanger (TC 2.A.31) family.

It is found in the vacuole membrane. The polypeptide is Putative transporter C543.05c (Schizosaccharomyces pombe (strain 972 / ATCC 24843) (Fission yeast)).